The chain runs to 709 residues: Protein SOSEKI 3 (709 aa).

The tract at residues 8–101 (SSVQVLYQLS…YVLRASELFD (94 aa)) is DIX-like oligomerization domain. 5 disordered regions span residues 242–266 (LHTP…AKRM), 315–344 (RDGR…AEQS), 358–393 (GGSS…KTPC), 411–439 (PSPA…NRPS), and 506–560 (DSPT…DTKP). Positions 329-342 (ELREVQNEKEKEAE) are enriched in basic and acidic residues. The segment covering 417 to 436 (NKAHSSLDRQEIPPQEECKN) has biased composition (basic and acidic residues). A compositionally biased stretch (polar residues) spans 529–544 (VKTSNSLPRVKTTTSP). Residues 663 to 692 (ILQECSTCGRTFKPDSLQVHMRGCHPPQYA) form a C2HC/C3H-type zinc finger. Zn(2+) is bound by residues Cys-667, Cys-670, His-682, and Cys-686.

Belongs to the SOSEKI family. As to quaternary structure, homodimer. Forms long polymer filaments with other SOKs proteins polymers crucial for polar localization and biological activity. Zn(2+) is required as a cofactor.

The protein resides in the cell membrane. Its function is as follows. SOSEKI proteins locally interpret global polarity cues and can influence cell division orientation to coordinate cell polarization relative to body axes. The chain is Protein SOSEKI 3 from Physcomitrium patens (Spreading-leaved earth moss).